A 104-amino-acid polypeptide reads, in one-letter code: MAAKIRKGDKVIVLSGRDKGRTGEVFEVRPAEGRALVRGVNIVKRHQKQTQNQEGGILSKESPIDLSNIAIVGKDGKPTRVGFKIQADGTKVRVAKRSGAEIDG.

The protein belongs to the universal ribosomal protein uL24 family. In terms of assembly, part of the 50S ribosomal subunit.

Functionally, one of two assembly initiator proteins, it binds directly to the 5'-end of the 23S rRNA, where it nucleates assembly of the 50S subunit. Its function is as follows. One of the proteins that surrounds the polypeptide exit tunnel on the outside of the subunit. The sequence is that of Large ribosomal subunit protein uL24 from Nitrobacter winogradskyi (strain ATCC 25391 / DSM 10237 / CIP 104748 / NCIMB 11846 / Nb-255).